The following is a 379-amino-acid chain: 1-deoxy-D-xylulose 5-phosphate reductoisomerase (379 aa).

NADPH-binding residues include T10, G11, S12, I13, N39, and N121. Residue K122 participates in 1-deoxy-D-xylulose 5-phosphate binding. An NADPH-binding site is contributed by E123. D147 serves as a coordination point for Mn(2+). The 1-deoxy-D-xylulose 5-phosphate site is built by S148, E149, S173, and H196. Position 149 (E149) interacts with Mn(2+). G202 is an NADPH binding site. 1-deoxy-D-xylulose 5-phosphate-binding residues include S209, N214, K215, and E218. E218 provides a ligand contact to Mn(2+).

It belongs to the DXR family. Mg(2+) is required as a cofactor. The cofactor is Mn(2+).

It catalyses the reaction 2-C-methyl-D-erythritol 4-phosphate + NADP(+) = 1-deoxy-D-xylulose 5-phosphate + NADPH + H(+). Its pathway is isoprenoid biosynthesis; isopentenyl diphosphate biosynthesis via DXP pathway; isopentenyl diphosphate from 1-deoxy-D-xylulose 5-phosphate: step 1/6. In terms of biological role, catalyzes the NADPH-dependent rearrangement and reduction of 1-deoxy-D-xylulose-5-phosphate (DXP) to 2-C-methyl-D-erythritol 4-phosphate (MEP). In Chlamydia felis (strain Fe/C-56) (Chlamydophila felis), this protein is 1-deoxy-D-xylulose 5-phosphate reductoisomerase.